A 440-amino-acid chain; its full sequence is Glutamyl-tRNA reductase (440 aa).

Residues Thr-40–Arg-43, Ser-100, Glu-105–Glu-107, and Gln-111 each bind substrate. Cys-41 functions as the Nucleophile in the catalytic mechanism. Position 181–186 (Gly-181–Ala-186) interacts with NADP(+).

The protein belongs to the glutamyl-tRNA reductase family. As to quaternary structure, homodimer.

It carries out the reaction (S)-4-amino-5-oxopentanoate + tRNA(Glu) + NADP(+) = L-glutamyl-tRNA(Glu) + NADPH + H(+). It participates in porphyrin-containing compound metabolism; protoporphyrin-IX biosynthesis; 5-aminolevulinate from L-glutamyl-tRNA(Glu): step 1/2. Its function is as follows. Catalyzes the NADPH-dependent reduction of glutamyl-tRNA(Glu) to glutamate 1-semialdehyde (GSA). This chain is Glutamyl-tRNA reductase, found in Renibacterium salmoninarum (strain ATCC 33209 / DSM 20767 / JCM 11484 / NBRC 15589 / NCIMB 2235).